The chain runs to 341 residues: GDP-mannose transporter GONST5 (341 aa).

A run of 8 helical transmembrane segments spans residues 17 to 37 (LSILQWWGFNVTVIIMNKWIF), 44 to 64 (FPLSVSCVHFICSSIGAYIVI), 89 to 109 (FVFCINIVLGNISLRYIPVSF), 141 to 161 (LVPIVGGILLTSITELSFNVF), 192 to 212 (INTVYYMAPFATMILGLPAFL), 233 to 253 (IILFNSGVLAFCLNFSIFYVI), 260 to 280 (TFNVAGNLKVAVAVFVSWMIF), and 284 to 304 (ISPMNAVGCGITLVGCTFYGY). Residues 33–152 (NKWIFQKLDF…PIVGGILLTS (120 aa)) form the EamA domain.

Belongs to the TPT transporter family. TPT (TC 2.A.7.9) subfamily. As to expression, expressed in rosette leaves, flowers and siliques.

The protein resides in the golgi apparatus membrane. Its function is as follows. GDP-mannose transporter that may be involved in the import of GDP-mannose from the cytoplasm into the Golgi lumen. The chain is GDP-mannose transporter GONST5 (GONST5) from Arabidopsis thaliana (Mouse-ear cress).